The primary structure comprises 423 residues: SH2 domain-containing adapter protein F (423 aa).

Disordered regions lie at residues 1-87 (MQQE…STTR), 110-208 (DPFD…WEWK), and 225-312 (DLPW…GEWT). A compositionally biased stretch (acidic residues) spans 192-203 (EDDERPPEEYDQ). Tyr201 is modified (phosphotyrosine). The SH2 domain occupies 323 to 418 (WYHGAISRTD…AEHMSLLYPV (96 aa)).

As to quaternary structure, interacts with phosphorylated 'Tyr-720' of PDGFRA via its SH2 domain. In terms of processing, may become phosphorylated upon binding to PDGFRA. Expressed in skeletal muscle, brain, liver, prostate, testis, ovary, small intestine and colon.

Its function is as follows. Adapter protein which may play a role in the regulation of apoptosis in response to PDGF. This Homo sapiens (Human) protein is SH2 domain-containing adapter protein F.